The sequence spans 602 residues: Translation initiation factor IF-2 (602 aa).

The tr-type G domain occupies 112–281 (KRAPIITIMG…LLLCEVLDLK (170 aa)). A G1 region spans residues 121–128 (GHVDHGKT). A GTP-binding site is contributed by 121-128 (GHVDHGKT). The G2 stretch occupies residues 146–150 (GITQH). Residues 167 to 170 (DTPG) are G3. GTP is bound by residues 167-171 (DTPGH) and 221-224 (NKMD). The tract at residues 221-224 (NKMD) is G4. Positions 257–259 (SAL) are G5.

The protein belongs to the TRAFAC class translation factor GTPase superfamily. Classic translation factor GTPase family. IF-2 subfamily.

The protein resides in the cytoplasm. One of the essential components for the initiation of protein synthesis. Protects formylmethionyl-tRNA from spontaneous hydrolysis and promotes its binding to the 30S ribosomal subunits. Also involved in the hydrolysis of GTP during the formation of the 70S ribosomal complex. In Mycoplasmopsis synoviae (strain 53) (Mycoplasma synoviae), this protein is Translation initiation factor IF-2.